The primary structure comprises 236 residues: 2-C-methyl-D-erythritol 4-phosphate cytidylyltransferase (236 aa).

It belongs to the IspD/TarI cytidylyltransferase family. IspD subfamily. In terms of assembly, homodimer.

The catalysed reaction is 2-C-methyl-D-erythritol 4-phosphate + CTP + H(+) = 4-CDP-2-C-methyl-D-erythritol + diphosphate. It participates in isoprenoid biosynthesis; isopentenyl diphosphate biosynthesis via DXP pathway; isopentenyl diphosphate from 1-deoxy-D-xylulose 5-phosphate: step 2/6. Catalyzes the formation of 4-diphosphocytidyl-2-C-methyl-D-erythritol from CTP and 2-C-methyl-D-erythritol 4-phosphate (MEP). This is 2-C-methyl-D-erythritol 4-phosphate cytidylyltransferase from Salmonella paratyphi C (strain RKS4594).